We begin with the raw amino-acid sequence, 217 residues long: Probable GTP-binding protein EngB (217 aa).

In terms of domain architecture, EngB-type G spans 44-217 (DRIEVCFAGR…TLRTIVATLG (174 aa)). Residues 52–59 (GRSNVGKS), 79–83 (GRTQE), 97–100 (DLPG), 164–167 (TKAD), and 198–200 (TSS) each bind GTP. Mg(2+) is bound by residues S59 and T81.

It belongs to the TRAFAC class TrmE-Era-EngA-EngB-Septin-like GTPase superfamily. EngB GTPase family. The cofactor is Mg(2+).

In terms of biological role, necessary for normal cell division and for the maintenance of normal septation. This chain is Probable GTP-binding protein EngB, found in Cereibacter sphaeroides (strain ATCC 17023 / DSM 158 / JCM 6121 / CCUG 31486 / LMG 2827 / NBRC 12203 / NCIMB 8253 / ATH 2.4.1.) (Rhodobacter sphaeroides).